The chain runs to 315 residues: Ribosomal RNA small subunit methyltransferase H (315 aa).

S-adenosyl-L-methionine is bound by residues 37–39 (GGH), Asp57, Phe83, Asp105, and Gln112.

The protein belongs to the methyltransferase superfamily. RsmH family.

The protein resides in the cytoplasm. The catalysed reaction is cytidine(1402) in 16S rRNA + S-adenosyl-L-methionine = N(4)-methylcytidine(1402) in 16S rRNA + S-adenosyl-L-homocysteine + H(+). Functionally, specifically methylates the N4 position of cytidine in position 1402 (C1402) of 16S rRNA. This Pseudomonas putida (strain W619) protein is Ribosomal RNA small subunit methyltransferase H.